The following is a 240-amino-acid chain: 2,3,4,5-tetrahydropyridine-2,6-dicarboxylate N-acetyltransferase (240 aa).

Belongs to the transferase hexapeptide repeat family. DapH subfamily.

It catalyses the reaction (S)-2,3,4,5-tetrahydrodipicolinate + acetyl-CoA + H2O = L-2-acetamido-6-oxoheptanedioate + CoA. The protein operates within amino-acid biosynthesis; L-lysine biosynthesis via DAP pathway; LL-2,6-diaminopimelate from (S)-tetrahydrodipicolinate (acetylase route): step 1/3. In terms of biological role, catalyzes the transfer of an acetyl group from acetyl-CoA to tetrahydrodipicolinate. This chain is 2,3,4,5-tetrahydropyridine-2,6-dicarboxylate N-acetyltransferase, found in Bacillus cereus (strain AH187).